The primary structure comprises 459 residues: tRNA modification GTPase MnmE (459 aa).

Positions 24, 82, and 122 each coordinate (6S)-5-formyl-5,6,7,8-tetrahydrofolate. The region spanning 219-379 (GIKVVISGAP…LRQHLYFSFK (161 aa)) is the TrmE-type G domain. GTP is bound by residues 229–234 (NSGKSS), 248–254 (TNFPGTT), and 273–276 (DTAG). Mg(2+)-binding residues include S233 and T254. K459 provides a ligand contact to (6S)-5-formyl-5,6,7,8-tetrahydrofolate.

This sequence belongs to the TRAFAC class TrmE-Era-EngA-EngB-Septin-like GTPase superfamily. TrmE GTPase family. Homodimer. Heterotetramer of two MnmE and two MnmG subunits. Requires K(+) as cofactor.

It localises to the cytoplasm. Functionally, exhibits a very high intrinsic GTPase hydrolysis rate. Involved in the addition of a carboxymethylaminomethyl (cmnm) group at the wobble position (U34) of certain tRNAs, forming tRNA-cmnm(5)s(2)U34. The polypeptide is tRNA modification GTPase MnmE (Buchnera aphidicola subsp. Baizongia pistaciae (strain Bp)).